The primary structure comprises 533 residues: Beta-1,4 N-acetylgalactosaminyltransferase 1 (533 aa).

Residues 1–7 (MRLDRRA) lie on the Cytoplasmic side of the membrane. Residues 8–25 (LYALVLLLACASLGLLYS) traverse the membrane as a helical; Signal-anchor for type II membrane protein segment. Residues 26 to 533 (STRNAPSLPN…KHRLQCMTAE (508 aa)) are Lumenal-facing. N-linked (GlcNAc...) asparagine glycosylation is found at Asn79, Asn179, and Asn274. A disulfide bridge connects residues Cys429 and Cys476.

Belongs to the glycosyltransferase 2 family. In terms of assembly, homodimer; disulfide-linked. Most abundant in brain, liver, lung, spleen and testis.

Its subcellular location is the golgi apparatus membrane. It catalyses the reaction a ganglioside GM3 (d18:1(4E)) + UDP-N-acetyl-alpha-D-galactosamine = a ganglioside GM2 (d18:1(4E)) + UDP + H(+). The catalysed reaction is a ganglioside GD3 (d18:1(4E)) + UDP-N-acetyl-alpha-D-galactosamine = a ganglioside GD2 (d18:1(4E)) + UDP + H(+). It carries out the reaction a ganglioside GM3 + UDP-N-acetyl-alpha-D-galactosamine = a ganglioside GM2 + UDP + H(+). The enzyme catalyses a ganglioside GD3 + UDP-N-acetyl-alpha-D-galactosamine = a ganglioside GD2 + UDP + H(+). It catalyses the reaction a ganglioside GD1a + UDP-N-acetyl-alpha-D-galactosamine = a ganglioside GalNAc-GD1a + UDP + H(+). The catalysed reaction is a ganglioside GT3 (d18:1(4E)) + UDP-N-acetyl-alpha-D-galactosamine = a ganglioside GT2 (d18:1(4E)) + UDP + H(+). It carries out the reaction a beta-D-Gal-(1-&gt;4)-beta-D-Glc-(1&lt;-&gt;1)-Cer(d18:1(4E)) + UDP-N-acetyl-alpha-D-galactosamine = a ganglioside GA2 (d18:1(4E)) + UDP + H(+). The enzyme catalyses a neolactoside IV(3)-alpha-NeuGc-nLc4Cer + UDP-N-acetyl-alpha-D-galactosamine = a neolactoside IV(4)-beta-GalNAc-IV(3)-alpha-NeuGc-nLc4Cer + UDP + H(+). It participates in sphingolipid metabolism. Involved in the biosynthesis of gangliosides GM2, GD2 and GA2. Functionally, involved in the biosynthesis of gangliosides GM2, GD2, GT2 and GA2 from GM3, GD3, GT3 and GA3, respectively. This chain is Beta-1,4 N-acetylgalactosaminyltransferase 1, found in Mus musculus (Mouse).